Consider the following 297-residue polypeptide: 4-diphosphocytidyl-2-C-methyl-D-erythritol kinase (297 aa).

Residue lysine 6 is part of the active site. Residue 94-104 (PVAGGMAGGSA) coordinates ATP. Aspartate 136 is an active-site residue.

Belongs to the GHMP kinase family. IspE subfamily.

The enzyme catalyses 4-CDP-2-C-methyl-D-erythritol + ATP = 4-CDP-2-C-methyl-D-erythritol 2-phosphate + ADP + H(+). It participates in isoprenoid biosynthesis; isopentenyl diphosphate biosynthesis via DXP pathway; isopentenyl diphosphate from 1-deoxy-D-xylulose 5-phosphate: step 3/6. Catalyzes the phosphorylation of the position 2 hydroxy group of 4-diphosphocytidyl-2C-methyl-D-erythritol. The polypeptide is 4-diphosphocytidyl-2-C-methyl-D-erythritol kinase (Nocardioides sp. (strain ATCC BAA-499 / JS614)).